The following is a 1383-amino-acid chain: DNA-directed RNA polymerase subunit beta'' (1383 aa).

Zn(2+) is bound by residues Cys220, Cys289, Cys296, and Cys299.

This sequence belongs to the RNA polymerase beta' chain family. RpoC2 subfamily. In plastids the minimal PEP RNA polymerase catalytic core is composed of four subunits: alpha, beta, beta', and beta''. When a (nuclear-encoded) sigma factor is associated with the core the holoenzyme is formed, which can initiate transcription. It depends on Zn(2+) as a cofactor.

It localises to the plastid. It is found in the chloroplast. It catalyses the reaction RNA(n) + a ribonucleoside 5'-triphosphate = RNA(n+1) + diphosphate. DNA-dependent RNA polymerase catalyzes the transcription of DNA into RNA using the four ribonucleoside triphosphates as substrates. The chain is DNA-directed RNA polymerase subunit beta'' from Oenothera biennis (German evening primrose).